We begin with the raw amino-acid sequence, 145 residues long: Actin-depolymerizing factor 2 (145 aa).

The 133-residue stretch at 13–145 (GMGVAPDIRD…DLEVLRERAH (133 aa)) folds into the ADF-H domain.

Belongs to the actin-binding proteins ADF family.

In terms of biological role, actin-depolymerizing protein. Severs actin filaments (F-actin) and binds to actin monomers. The polypeptide is Actin-depolymerizing factor 2 (ADF2) (Oryza sativa subsp. japonica (Rice)).